A 429-amino-acid polypeptide reads, in one-letter code: Glutamate-1-semialdehyde 2,1-aminomutase 1 (429 aa).

Lysine 268 bears the N6-(pyridoxal phosphate)lysine mark.

It belongs to the class-III pyridoxal-phosphate-dependent aminotransferase family. HemL subfamily. In terms of assembly, homodimer. Pyridoxal 5'-phosphate serves as cofactor.

It is found in the cytoplasm. It carries out the reaction (S)-4-amino-5-oxopentanoate = 5-aminolevulinate. It participates in porphyrin-containing compound metabolism; protoporphyrin-IX biosynthesis; 5-aminolevulinate from L-glutamyl-tRNA(Glu): step 2/2. In Staphylococcus haemolyticus (strain JCSC1435), this protein is Glutamate-1-semialdehyde 2,1-aminomutase 1.